The following is a 781-amino-acid chain: DNA translocase FtsK 2 (781 aa).

Transmembrane regions (helical) follow at residues 24-44 (LLGE…LTIL), 74-94 (FADV…LLLL), 120-140 (AGVT…LEAI), and 170-190 (GFTG…SLFF). Over 191 to 781 (HFSWLNLAEQ…NRNGNVVEEE (591 aa)) the chain is Cytoplasmic. The region spanning 414–623 (GKPVVADLAK…FQVSSKIDSR (210 aa)) is the FtsK domain. ATP is bound at residue 434 to 439 (GSGKSV).

Belongs to the FtsK/SpoIIIE/SftA family. As to quaternary structure, homohexamer. Forms a ring that surrounds DNA.

Its subcellular location is the cell inner membrane. Functionally, essential cell division protein that coordinates cell division and chromosome segregation. The N-terminus is involved in assembly of the cell-division machinery. The C-terminus functions as a DNA motor that moves dsDNA in an ATP-dependent manner towards the dif recombination site, which is located within the replication terminus region. Translocation stops specifically at Xer-dif sites, where FtsK interacts with the Xer recombinase, allowing activation of chromosome unlinking by recombination. FtsK orienting polar sequences (KOPS) guide the direction of DNA translocation. FtsK can remove proteins from DNA as it translocates, but translocation stops specifically at XerCD-dif site, thereby preventing removal of XerC and XerD from dif. The protein is DNA translocase FtsK 2 (ftsK2) of Ralstonia nicotianae (strain ATCC BAA-1114 / GMI1000) (Ralstonia solanacearum).